The chain runs to 389 residues: MDLKVLKSEIFEHLNNKIIPFWEELKDENNGGYISYVGFDLKPDPYAPKGLVLTSRILWFFSRLYNQLRKEEFINFADHSYKFLIKSFLDKENKGFYWMVDYKGEPIDKRKHLYGQAFVLYGLSEYYKATQKKESLDLALEIYKIIEEVCKNDVGYKEEFDEKWNPKENIIVSEYGIICERSMNTLLHILEAYTNLFTATYDQSIKKKIEDLIILFKEKIYDSKTNHLYVFFDKKMNPIIDAISYGHDIEATWLIDEALRYIDNNKLIKEMSEINLKIAEKVLEEAFESGSLLNERVRGIVDKNRIWWVQAEALVGFLNAYQKSKLDKFLKAVFELWEFIKDFLVDKRAQGEWFWKLDENYIPSPMPEVDLWKCPYHNGRMCLEVIKRI.

Belongs to the cellobiose 2-epimerase family. In terms of assembly, monomer.

It catalyses the reaction D-cellobiose = beta-D-glucosyl-(1-&gt;4)-D-mannopyranose. In terms of biological role, catalyzes the reversible epimerization of cellobiose to 4-O-beta-D-glucopyranosyl-D-mannose (Glc-Man). Catalyzes epimerization but also isomerization for beta-1,4- and alpha-1,4-gluco-oligosaccharides. Can use cellobiose, lactose, cellotriose, maltose and maltotriose. The chain is Cellobiose 2-epimerase from Dictyoglomus turgidum (strain DSM 6724 / Z-1310).